The following is a 235-amino-acid chain: Nitrile hydratase subunit beta (235 aa).

Belongs to the nitrile hydratase subunit beta family. Heterodimer of an alpha and a beta chain.

It carries out the reaction an aliphatic primary amide = an aliphatic nitrile + H2O. In terms of biological role, NHase catalyzes the hydration of various nitrile compounds to the corresponding amides. This Rhodococcus sp protein is Nitrile hydratase subunit beta (nthB).